A 94-amino-acid polypeptide reads, in one-letter code: DNA-directed RNA polymerase subunit Rpo11 (94 aa).

The protein belongs to the archaeal Rpo11/eukaryotic RPB11/RPC19 RNA polymerase subunit family. As to quaternary structure, part of the RNA polymerase complex.

It is found in the cytoplasm. The catalysed reaction is RNA(n) + a ribonucleoside 5'-triphosphate = RNA(n+1) + diphosphate. DNA-dependent RNA polymerase (RNAP) catalyzes the transcription of DNA into RNA using the four ribonucleoside triphosphates as substrates. The polypeptide is DNA-directed RNA polymerase subunit Rpo11 (Thermococcus kodakarensis (strain ATCC BAA-918 / JCM 12380 / KOD1) (Pyrococcus kodakaraensis (strain KOD1))).